A 799-amino-acid polypeptide reads, in one-letter code: E3 UFM1-protein ligase 1 homolog (799 aa).

The tract at residues 429-483 (TTTTTTTQPSKKKDNLINSDDDDNQDNNKKSSKGKNKKSKQQQSSIQKLINDSED) is disordered. Residues 458–468 (KSSKGKNKKSK) show a composition bias toward basic residues. A compositionally biased stretch (low complexity) spans 469–478 (QQQSSIQKLI).

Belongs to the UFL1 family.

In terms of biological role, E3 UFM1-protein ligase that mediates ufmylation of target proteins. The sequence is that of E3 UFM1-protein ligase 1 homolog from Dictyostelium discoideum (Social amoeba).